A 201-amino-acid chain; its full sequence is ATP-dependent Clp protease proteolytic subunit (201 aa).

The active-site Nucleophile is the serine 97. The active site involves histidine 122.

It belongs to the peptidase S14 family. Fourteen ClpP subunits assemble into 2 heptameric rings which stack back to back to give a disk-like structure with a central cavity, resembling the structure of eukaryotic proteasomes.

The protein localises to the cytoplasm. The enzyme catalyses Hydrolysis of proteins to small peptides in the presence of ATP and magnesium. alpha-casein is the usual test substrate. In the absence of ATP, only oligopeptides shorter than five residues are hydrolyzed (such as succinyl-Leu-Tyr-|-NHMec, and Leu-Tyr-Leu-|-Tyr-Trp, in which cleavage of the -Tyr-|-Leu- and -Tyr-|-Trp bonds also occurs).. In terms of biological role, cleaves peptides in various proteins in a process that requires ATP hydrolysis. Has a chymotrypsin-like activity. Plays a major role in the degradation of misfolded proteins. This Nitratidesulfovibrio vulgaris (strain DSM 19637 / Miyazaki F) (Desulfovibrio vulgaris) protein is ATP-dependent Clp protease proteolytic subunit.